A 131-amino-acid polypeptide reads, in one-letter code: Hydrogenase maturation factor HypA (131 aa).

His2 is a binding site for Ni(2+). Zn(2+) contacts are provided by Cys73, Cys76, Cys105, and Cys108.

It belongs to the HypA/HybF family.

Its function is as follows. Involved in the maturation of [NiFe] hydrogenases. Required for nickel insertion into the metal center of the hydrogenase. In Thermomicrobium roseum (strain ATCC 27502 / DSM 5159 / P-2), this protein is Hydrogenase maturation factor HypA.